Reading from the N-terminus, the 380-residue chain is Cytochrome b (380 aa).

Transmembrane regions (helical) follow at residues 34–54 (FGSL…LLAM), 78–99 (WLIR…YLHI), 114–134 (WNTG…GYVL), and 179–199 (FFAL…IHLT). Residues H84 and H98 each contribute to the heme b site. Heme b contacts are provided by H183 and H197. H202 lines the a ubiquinone pocket. 4 consecutive transmembrane segments (helical) span residues 227–247 (LKDI…ALFS), 289–309 (LGGV…PLLH), 321–341 (LSQL…WIGS), and 348–368 (FIII…VLFP).

It belongs to the cytochrome b family. The cytochrome bc1 complex contains 11 subunits: 3 respiratory subunits (MT-CYB, CYC1 and UQCRFS1), 2 core proteins (UQCRC1 and UQCRC2) and 6 low-molecular weight proteins (UQCRH/QCR6, UQCRB/QCR7, UQCRQ/QCR8, UQCR10/QCR9, UQCR11/QCR10 and a cleavage product of UQCRFS1). This cytochrome bc1 complex then forms a dimer. Requires heme b as cofactor.

It localises to the mitochondrion inner membrane. Functionally, component of the ubiquinol-cytochrome c reductase complex (complex III or cytochrome b-c1 complex) that is part of the mitochondrial respiratory chain. The b-c1 complex mediates electron transfer from ubiquinol to cytochrome c. Contributes to the generation of a proton gradient across the mitochondrial membrane that is then used for ATP synthesis. In Thalassarche impavida (Albatross), this protein is Cytochrome b (MT-CYB).